A 127-amino-acid chain; its full sequence is Thioredoxin-3, mitochondrial (127 aa).

The transit peptide at 1–21 (MLFYKPVMRMAVRPLKSIRFQ) directs the protein to the mitochondrion. A Thioredoxin domain is found at 22-127 (SSYTSITKLT…TALEKGIKDL (106 aa)). Catalysis depends on nucleophile residues Cys-55 and Cys-58. Cys-55 and Cys-58 are disulfide-bonded.

Belongs to the thioredoxin family.

It localises to the mitochondrion. The sequence is that of Thioredoxin-3, mitochondrial (TRX3) from Saccharomyces cerevisiae (strain ATCC 204508 / S288c) (Baker's yeast).